Consider the following 625-residue polypeptide: Baeyer-Villiger monooxygenase ATR8 (625 aa).

Residues D112, T120–W123, D132, and Y138 contribute to the FAD site. Q130–D132 serves as a coordination point for NADP(+). Residues T266–Q272, R289–T290, and K405–R406 each bind NADP(+).

It belongs to the FAD-binding monooxygenase family. Requires FAD as cofactor.

It functions in the pathway mycotoxin biosynthesis. Baeyer-Villiger monooxygenase; part of the core atranone cluster (CAC) which products are predicted to catalyze most or all steps of mycotoxin atranone synthesis, starting from geranylgeranyl pyrophosphate (GGPP). The initial cyclization of GGPP to dolabellane is probably performed by the terpene cyclase ATR13. The Baeyer-Villiger oxidation near the end of the atranone synthesis, which converts atranones D and E to atranones F and G is predicted to be catalyzed by the monooxygenase ATR8. Of the CAC's other predicted gene products, the reducing PKS ATR6 might synthesize a polyketide chain. This polyketide is probably transferred onto the atranone backbone by the polyketide transferase ATR5. Other predicted CAC products include 4 oxygenases (ATR2, ATR3, ATR4, and ATR14), 3 short-chain reductases (ATR7, ATR9, and ATR10), and a methyltransferase (ATR12). These may all be involved in the various steps of atranone biosynthesis, although their specific roles must await experimental determination. This Stachybotrys chlorohalonatus (strain IBT 40285) protein is Baeyer-Villiger monooxygenase ATR8.